Consider the following 287-residue polypeptide: MERSVTAGKWLAYCRLMRIDKPIGSLLLLWPTLWALWLAGGGAPAPWTLFVFVAGVFLMRAAGCVINDYADRHFDGHVKRTASRPLPSGEVSEQSAKILFVVLVLLAFGLVLTLNKMTIWLSVAGLVLAWVYPFMKRVSHLPQFVLGAAFGWSIPMAYAAVSESLPATCWMMFLAYICWTVAYDTQYAMVDRDDDLKIGVKSTAILFGRFDNIIIGLLQFSMLALLLALGNITGLGIPYTISLLVAAGMFIYQQILTAGRERDACFKAFHNNKYAGMAIFIGVLFGL.

6 helical membrane-spanning segments follow: residues 23–40 (IGSL…WLAG), 98–118 (ILFV…NKMT), 141–161 (LPQF…YAAV), 163–183 (ESLP…TVAY), 213–233 (IIIG…GNIT), and 235–255 (LGIP…YQQI).

This sequence belongs to the UbiA prenyltransferase family. The cofactor is Mg(2+).

The protein resides in the cell inner membrane. It catalyses the reaction all-trans-octaprenyl diphosphate + 4-hydroxybenzoate = 4-hydroxy-3-(all-trans-octaprenyl)benzoate + diphosphate. It functions in the pathway cofactor biosynthesis; ubiquinone biosynthesis. Catalyzes the prenylation of para-hydroxybenzoate (PHB) with an all-trans polyprenyl group. Mediates the second step in the final reaction sequence of ubiquinone-8 (UQ-8) biosynthesis, which is the condensation of the polyisoprenoid side chain with PHB, generating the first membrane-bound Q intermediate 3-octaprenyl-4-hydroxybenzoate. This chain is 4-hydroxybenzoate octaprenyltransferase, found in Pectobacterium atrosepticum (strain SCRI 1043 / ATCC BAA-672) (Erwinia carotovora subsp. atroseptica).